We begin with the raw amino-acid sequence, 341 residues long: Transcription factor JunD (341 aa).

The tract at residues valine 21 to methionine 49 is disordered. A Menin-binding motif (MBM) motif is present at residues proline 35–serine 47. Residues lysine 51–alanine 60 carry the MAP kinase docking motif; essential for its phosphorylation motif. Residues alanine 65–aspartate 85 are disordered. The residue at position 90 (serine 90) is a Phosphoserine. Position 100 is a phosphoserine; by MAPK8 (serine 100). Position 117 is a phosphothreonine (threonine 117). The tract at residues alanine 155–proline 176 is disordered. Residues serine 245, serine 249, and serine 253 each carry the phosphoserine modification. The tract at residues arginine 262–arginine 289 is basic motif. In terms of domain architecture, bZIP spans arginine 262–histidine 325. Residues leucine 290–leucine 318 are leucine-zipper.

This sequence belongs to the bZIP family. Jun subfamily. Heterodimer; binds DNA as a heterodimer. Component of an AP-1 transcription factor complex composed of JUN-FOS heterodimers. As part of the AP-1 transcription factor complex, forms heterodimers with FOS proteins, thereby binding to the AP-1 consensus sequence and stimulating transcription. Forms heterodimers with FOSB; thereby binding to the AP-1 consensus sequence. Interacts (via MBM motif) with MEN1; this interaction represses transcriptional activation. Interacts with MAPK10; this interaction is inhibited in the presence of MEN1. In terms of processing, phosphorylated by MAP kinases MAPK8 and MAPK10; phosphorylation is inhibited in the presence of MEN1.

It localises to the nucleus. Transcription factor binding AP-1 sites. Heterodimerizes with proteins of the FOS family to form an AP-1 transcription factor complex, thereby enhancing their DNA binding activity to an AP-1 consensus sequence 3'-TGA[GC]TCA-5' and enhancing their transcriptional activity. This is Transcription factor JunD (Jund) from Rattus norvegicus (Rat).